The sequence spans 169 residues: S-ribosylhomocysteine lyase (169 aa).

3 residues coordinate Fe cation: His-54, His-58, and Cys-128.

It belongs to the LuxS family. As to quaternary structure, homodimer. Fe cation is required as a cofactor.

It catalyses the reaction S-(5-deoxy-D-ribos-5-yl)-L-homocysteine = (S)-4,5-dihydroxypentane-2,3-dione + L-homocysteine. In terms of biological role, involved in the synthesis of autoinducer 2 (AI-2) which is secreted by bacteria and is used to communicate both the cell density and the metabolic potential of the environment. The regulation of gene expression in response to changes in cell density is called quorum sensing. Catalyzes the transformation of S-ribosylhomocysteine (RHC) to homocysteine (HC) and 4,5-dihydroxy-2,3-pentadione (DPD). The sequence is that of S-ribosylhomocysteine lyase from Aeromonas hydrophila subsp. hydrophila (strain ATCC 7966 / DSM 30187 / BCRC 13018 / CCUG 14551 / JCM 1027 / KCTC 2358 / NCIMB 9240 / NCTC 8049).